A 423-amino-acid polypeptide reads, in one-letter code: Gamma-glutamyl phosphate reductase (423 aa).

The protein belongs to the gamma-glutamyl phosphate reductase family.

Its subcellular location is the cytoplasm. It carries out the reaction L-glutamate 5-semialdehyde + phosphate + NADP(+) = L-glutamyl 5-phosphate + NADPH + H(+). It functions in the pathway amino-acid biosynthesis; L-proline biosynthesis; L-glutamate 5-semialdehyde from L-glutamate: step 2/2. In terms of biological role, catalyzes the NADPH-dependent reduction of L-glutamate 5-phosphate into L-glutamate 5-semialdehyde and phosphate. The product spontaneously undergoes cyclization to form 1-pyrroline-5-carboxylate. In Paraburkholderia phymatum (strain DSM 17167 / CIP 108236 / LMG 21445 / STM815) (Burkholderia phymatum), this protein is Gamma-glutamyl phosphate reductase.